Consider the following 337-residue polypeptide: Methionyl-tRNA formyltransferase (337 aa).

A (6S)-5,6,7,8-tetrahydrofolate-binding site is contributed by 116–119 (SILP).

It belongs to the Fmt family.

The catalysed reaction is L-methionyl-tRNA(fMet) + (6R)-10-formyltetrahydrofolate = N-formyl-L-methionyl-tRNA(fMet) + (6S)-5,6,7,8-tetrahydrofolate + H(+). Its function is as follows. Attaches a formyl group to the free amino group of methionyl-tRNA(fMet). The formyl group appears to play a dual role in the initiator identity of N-formylmethionyl-tRNA by promoting its recognition by IF2 and preventing the misappropriation of this tRNA by the elongation apparatus. The protein is Methionyl-tRNA formyltransferase of Desulfovibrio desulfuricans (strain ATCC 27774 / DSM 6949 / MB).